A 477-amino-acid chain; its full sequence is Adenosylhomocysteinase (477 aa).

Residues threonine 63, aspartate 142, and glutamate 202 each contribute to the substrate site. An NAD(+)-binding site is contributed by 203–205; that stretch reads TTT. Lysine 232 and aspartate 236 together coordinate substrate. Residues asparagine 237, 266-271, glutamate 289, asparagine 324, 345-347, and asparagine 390 contribute to the NAD(+) site; these read GYGDVG and IGH.

The protein belongs to the adenosylhomocysteinase family. NAD(+) serves as cofactor.

Its subcellular location is the cytoplasm. The catalysed reaction is S-adenosyl-L-homocysteine + H2O = L-homocysteine + adenosine. It participates in amino-acid biosynthesis; L-homocysteine biosynthesis; L-homocysteine from S-adenosyl-L-homocysteine: step 1/1. In terms of biological role, may play a key role in the regulation of the intracellular concentration of adenosylhomocysteine. This Leptothrix cholodnii (strain ATCC 51168 / LMG 8142 / SP-6) (Leptothrix discophora (strain SP-6)) protein is Adenosylhomocysteinase.